Here is a 286-residue protein sequence, read N- to C-terminus: ATP synthase gamma chain (286 aa).

The protein belongs to the ATPase gamma chain family. As to quaternary structure, F-type ATPases have 2 components, CF(1) - the catalytic core - and CF(0) - the membrane proton channel. CF(1) has five subunits: alpha(3), beta(3), gamma(1), delta(1), epsilon(1). CF(0) has three main subunits: a, b and c.

It localises to the cell inner membrane. Functionally, produces ATP from ADP in the presence of a proton gradient across the membrane. The gamma chain is believed to be important in regulating ATPase activity and the flow of protons through the CF(0) complex. This is ATP synthase gamma chain from Pseudomonas putida (strain ATCC 700007 / DSM 6899 / JCM 31910 / BCRC 17059 / LMG 24140 / F1).